We begin with the raw amino-acid sequence, 160 residues long: MACIYPTTFYTSLPTKSLNMGISLTTILILSVAVLLSTAAPPSCRECYQSLHYRGEMQQYFTYHTHIERSCYGNLIEECVESGKSYYKVKNLGVCGSRNGAICPRGKQWLCFTKIGQWGVNTQVLEDIKREQIIAKAKASKPTTPPENRPRHFHSFIQKL.

The first 39 residues, 1–39 (MACIYPTTFYTSLPTKSLNMGISLTTILILSVAVLLSTA), serve as a signal peptide directing secretion. The segment at 137–160 (AKASKPTTPPENRPRHFHSFIQKL) is disordered.

In terms of assembly, interacts (secreted) with SLC1A5; mainly at cell surface. In terms of tissue distribution, specifically expressed in placenta by extravillous trophoblasts and syncytiotrophoblasts (at protein level).

It localises to the secreted. In terms of biological role, may play a role in trophoblasts syncytialization, the spontaneous fusion of their plasma membranes, an essential process in placental development. May negatively regulate cell-cell fusion by interacting with SLC1A5, the probable receptor on the cell surface of the fusogenic syncytin-1/ERVW-1. This Homo sapiens (Human) protein is Suppressyn (ERVH48-1).